A 193-amino-acid chain; its full sequence is Probable nicotinate-nucleotide adenylyltransferase (193 aa).

This sequence belongs to the NadD family.

The catalysed reaction is nicotinate beta-D-ribonucleotide + ATP + H(+) = deamido-NAD(+) + diphosphate. It functions in the pathway cofactor biosynthesis; NAD(+) biosynthesis; deamido-NAD(+) from nicotinate D-ribonucleotide: step 1/1. Its function is as follows. Catalyzes the reversible adenylation of nicotinate mononucleotide (NaMN) to nicotinic acid adenine dinucleotide (NaAD). This is Probable nicotinate-nucleotide adenylyltransferase from Chlorobium phaeovibrioides (strain DSM 265 / 1930) (Prosthecochloris vibrioformis (strain DSM 265)).